A 252-amino-acid chain; its full sequence is 3-dehydroquinate dehydratase (252 aa).

3-dehydroquinate-binding positions include serine 21, 46–48, and arginine 82; that span reads EWR. The active-site Proton donor/acceptor is the histidine 143. The active-site Schiff-base intermediate with substrate is lysine 170. The 3-dehydroquinate site is built by arginine 213, serine 232, and glutamine 236.

This sequence belongs to the type-I 3-dehydroquinase family. In terms of assembly, homodimer.

It carries out the reaction 3-dehydroquinate = 3-dehydroshikimate + H2O. Its pathway is metabolic intermediate biosynthesis; chorismate biosynthesis; chorismate from D-erythrose 4-phosphate and phosphoenolpyruvate: step 3/7. Its function is as follows. Involved in the third step of the chorismate pathway, which leads to the biosynthesis of aromatic amino acids. Catalyzes the cis-dehydration of 3-dehydroquinate (DHQ) and introduces the first double bond of the aromatic ring to yield 3-dehydroshikimate. The polypeptide is 3-dehydroquinate dehydratase (Escherichia coli (strain K12 / MC4100 / BW2952)).